Consider the following 137-residue polypeptide: Venom allergen 4 (137 aa).

A signal peptide spans M1–A19.

It belongs to the ant venom allergen 2/4 family. As to quaternary structure, monomer. In terms of tissue distribution, expressed by the venom gland.

The protein localises to the secreted. The chain is Venom allergen 4 from Solenopsis invicta (Red imported fire ant).